The chain runs to 121 residues: MPTEETEPPVTAFMLVKTTPEWLALTVQERVDAFTTQVLPAIEARTSGVRSRFYDTEFYSARVTDVWVWEAEDHHAYQLLIDALRETPFWDRYFEVVDLLVGTENGYARTYGLEPVATITT.

Belongs to the darcynin family.

The polypeptide is Darcynin homolog (Streptomyces avermitilis (strain ATCC 31267 / DSM 46492 / JCM 5070 / NBRC 14893 / NCIMB 12804 / NRRL 8165 / MA-4680)).